The primary structure comprises 562 residues: Probable sesquiterpene synthase (562 aa).

Residues D315, D319, and E467 each contribute to the Mg(2+) site. A DDXXD motif motif is present at residues 315 to 319; the sequence is DDIYD.

This sequence belongs to the terpene synthase family. Tpsa subfamily. Mg(2+) is required as a cofactor. It depends on Mn(2+) as a cofactor.

Sesquiterpene synthase. This chain is Probable sesquiterpene synthase (STPS), found in Santalum murrayanum (Bitter quandong).